The primary structure comprises 213 residues: Probable transaldolase (213 aa).

Lysine 83 (schiff-base intermediate with substrate) is an active-site residue.

Belongs to the transaldolase family. Type 3B subfamily.

The protein localises to the cytoplasm. The catalysed reaction is D-sedoheptulose 7-phosphate + D-glyceraldehyde 3-phosphate = D-erythrose 4-phosphate + beta-D-fructose 6-phosphate. The protein operates within carbohydrate degradation; pentose phosphate pathway; D-glyceraldehyde 3-phosphate and beta-D-fructose 6-phosphate from D-ribose 5-phosphate and D-xylulose 5-phosphate (non-oxidative stage): step 2/3. Its function is as follows. Transaldolase is important for the balance of metabolites in the pentose-phosphate pathway. In Geobacillus thermodenitrificans (strain NG80-2), this protein is Probable transaldolase.